The primary structure comprises 710 residues: Polyribonucleotide nucleotidyltransferase (710 aa).

Mg(2+) contacts are provided by D485 and D491. Positions 552–611 constitute a KH domain; it reads PKILTLTINPDKIRDVIGPSGKVINKIIEETGVKIDIEQDGTVYISSLDTAMNQKAKQII. The S1 motif domain maps to 621 to 689; it reads GETYHGKVKR…NQGRVNLSRK (69 aa).

The protein belongs to the polyribonucleotide nucleotidyltransferase family. It depends on Mg(2+) as a cofactor.

The protein resides in the cytoplasm. The catalysed reaction is RNA(n+1) + phosphate = RNA(n) + a ribonucleoside 5'-diphosphate. Involved in mRNA degradation. Catalyzes the phosphorolysis of single-stranded polyribonucleotides processively in the 3'- to 5'-direction. This chain is Polyribonucleotide nucleotidyltransferase, found in Shouchella clausii (strain KSM-K16) (Alkalihalobacillus clausii).